The primary structure comprises 553 residues: HTH-type transcriptional regulator SgrR (553 aa).

Residues 1–113 (MSTSRLQQQF…RQMLLSQLGR (113 aa)) form the HTH marR-type domain. The H-T-H motif DNA-binding region spans 26–49 (LQALAEVLNCSRRHVRSLLGKMQH). The tract at residues 163–494 (ELEPDLSHHW…EELHQDIESW (332 aa)) is solute-binding.

Functionally, activates the small RNA gene sgrS under glucose-phosphate stress conditions as well as yfdZ. Represses its own transcription under both stress and non-stress conditions. Might act as a sensor of the intracellular accumulation of phosphoglucose by binding these molecules in its C-terminal solute-binding domain. This is HTH-type transcriptional regulator SgrR from Yersinia pseudotuberculosis serotype I (strain IP32953).